Here is a 114-residue protein sequence, read N- to C-terminus: uncharacterized protein (114 aa).

The 109-residue stretch at 6 to 114 (IFSKIIRREI…GGRPFSWPPG (109 aa)) folds into the HIT domain. Positions 98–102 (HLHLH) match the Histidine triad motif motif.

This is an uncharacterized protein from Synechocystis sp. (strain ATCC 27184 / PCC 6803 / Kazusa).